We begin with the raw amino-acid sequence, 1061 residues long: Lysine-specific demethylase jmjd-3.1 (1061 aa).

Disordered stretches follow at residues 30-49 and 256-417; these read VKNS…MRPV and KSLS…KRRT. A compositionally biased stretch (polar residues) spans 271 to 287; sequence QHTNSVGSSIGTTSGDS. The segment covering 310–320 has biased composition (low complexity); it reads STSSEFTETTS. Positions 321–330 are enriched in polar residues; sequence VANQTESNAG. A required for nuclear localization region spans residues 369–417; it reads KKKEQSATEPPIPRTKRAYTKNPNTIRKRRMKKNQSDDEEDDGPPKRRT. The segment at 418-759 is required for binding of unc-3 and for function in Y-to-PDA transdifferentiation; it reads INYQIEFRDA…FGTNIDLLSE (342 aa). The JmjC domain maps to 760-923; the sequence is NFKKQMNEIE…LATSIVAHDH (164 aa). Residues H811, E813, and H891 each coordinate Fe cation. The Zn(2+) site is built by C998, C1001, C1025, and C1028.

It belongs to the UTX family. As to quaternary structure, interacts with wdr-5.1 and unc-3. Fe(2+) serves as cofactor. Mainly expressed in head and tail.

Its subcellular location is the nucleus. Its function is as follows. Histone demethylase that specifically demethylates trimethylated 'Lys-27' of histone H3, a mark associated with transcriptional repression, thereby playing a central role in the histone code. Involved in the transcriptional regulation of the heat shock response, unfolded protein response and possibly other stress response target genes. Required for gonad development and organization. Required for the robust transdifferentiation of the Y rectal epithelial cell to the PDA motor neuron during larval development. Acts cell-autonomously in Y-to-PDA transdifferentiation, which depends on the demethylase activity and on recognition of the H3 tail. Cooperates with set-2 and unc-3 to ensure robust Y-to-PDA transdifferentiation. Promotes mitochondrial stress-induced longevity. Involved in lifespan regulation. This is Lysine-specific demethylase jmjd-3.1 from Caenorhabditis elegans.